The sequence spans 465 residues: D-arabinitol 4-dehydrogenase (465 aa).

This sequence belongs to the mannitol dehydrogenase family.

The catalysed reaction is D-arabinitol + NAD(+) = D-xylulose + NADH + H(+). The protein operates within carbohydrate metabolism; D-arabinitol metabolism. This chain is D-arabinitol 4-dehydrogenase (dalD), found in Ralstonia nicotianae (strain ATCC BAA-1114 / GMI1000) (Ralstonia solanacearum).